We begin with the raw amino-acid sequence, 487 residues long: b(0,+)-type amino acid transporter 1 (487 aa).

The disordered stretch occupies residues 1-22; the sequence is MGETVPRRRREDEKSIQSDEPK. Over 1–31 the chain is Cytoplasmic; it reads MGETVPRRRREDEKSIQSDEPKTTSLQKEVG. S18 carries the post-translational modification Phosphoserine. The chain crosses the membrane as a helical span at residues 32–55; it reads LISGICIIVGTIIGSGIFISPKSV. 43–47 is an L-arginine binding site; the sequence is IIGSG. The Extracellular segment spans residues 56 to 62; sequence LSNTQAV. Residues 63-84 form a helical membrane-spanning segment; it reads GPCLIIWAACGVLGTLGALCFA. The Cytoplasmic segment spans residues 85 to 110; sequence ELGTMITKSGGEYPYLMEAFGPIPAY. Residues 111–137 traverse the membrane as a helical segment; sequence LFSWSSLLVMKPSSFAIICLSFSEYVA. Topologically, residues 138–147 are extracellular; it reads TPFYSGCEPP. Helical transmembrane passes span 148 to 169 and 170 to 193; these read KVVV…NSLS and VRLG…IIII. Over 194–217 the chain is Extracellular; the sequence is SGLVLLAQGNTKNFENSFEGAEVS. The chain crosses the membrane as a helical span at residues 218-238; the sequence is VGAISLALYNGLWAYDGWNQL. An L-arginine-binding site is contributed by D233. Topologically, residues 239–251 are cytoplasmic; it reads NYITEELRNPFRN. Residues 252–274 form a helical membrane-spanning segment; sequence LPLAIIFGIPLVTVCYILINISY. The Extracellular portion of the chain corresponds to 275 to 302; it reads FTVMTPTELLQSQAVAVTFGDRVLYPAS. The helical transmembrane segment at 303 to 325 threads the bilayer; the sequence is WIVPVFVAFSTIGAANGTCFTAG. Residues 326–351 lie on the Cytoplasmic side of the membrane; the sequence is RLVYVAGREGHMLKVLSYISVRRLTP. Transmembrane regions (helical) follow at residues 352 to 370 and 371 to 391; these read APAI…IPGD and INSL…LTIL. Residues 392–410 lie on the Cytoplasmic side of the membrane; it reads GLIVMRFTRKELERPIKVP. Residues 411–431 form a helical membrane-spanning segment; it reads IFIPILVTFIAAFLVLAPVIT. At 432-434 the chain is on the extracellular side; that stretch reads NPA. A helical transmembrane segment spans residues 435 to 450; sequence WEYLYCVLFILSGLVF. The Cytoplasmic segment spans residues 451–487; that stretch reads YFLFVYYKFEWAQKISKPITMHLQMLMEVVPPEPDPK.

This sequence belongs to the amino acid-polyamine-organocation (APC) superfamily. Disulfide-linked heterodimer composed of the catalytic light chain subunit SLC7A9 and the heavy chain subunit. The heterodimer is the minimal functional unit. Assembles in heterotetramers (dimers of heterodimers) and higher order oligomers. Interacts with CAV1. As to expression, kidney and small intestine.

Its subcellular location is the apical cell membrane. It catalyses the reaction L-leucine(out) + L-arginine(in) = L-leucine(in) + L-arginine(out). The enzyme catalyses L-histidine(out) + L-arginine(in) = L-histidine(in) + L-arginine(out). The catalysed reaction is L-arginine(in) + L-phenylalanine(out) = L-arginine(out) + L-phenylalanine(in). It carries out the reaction L-cysteine(out) + L-arginine(in) = L-cysteine(in) + L-arginine(out). It catalyses the reaction L-cystine(out) + L-arginine(in) = L-cystine(in) + L-arginine(out). The enzyme catalyses L-lysine(out) + L-arginine(in) = L-lysine(in) + L-arginine(out). In terms of biological role, mediates the electrogenic exchange between cationic amino acids and neutral amino acids, with a stoichiometry of 1:1. Has system b(0,+)-like activity with high affinity for extracellular cationic amino acids and L-cystine and lower affinity for intracellular neutral amino acids. Substrate exchange is driven by high concentration of intracellular neutral amino acids and the intracellular reduction of L-cystine to L-cysteine. Required for reabsorption of L-cystine and dibasic amino acids across the brush border membrane in renal proximal tubules. This Oryctolagus cuniculus (Rabbit) protein is b(0,+)-type amino acid transporter 1.